The primary structure comprises 293 residues: Acidic endochitinase (293 aa).

Positions 1–22 are cleaved as a signal peptide; the sequence is MEKCFNIIPSLLLISLLIKSSN. One can recognise a GH18 domain in the interval 24–293; it reads AGIAVYWGQN…GYSNAIKGSV (270 aa). Disulfide bonds link Cys-43–Cys-90 and Cys-73–Cys-80. Glu-150 (proton donor) is an active-site residue. Cys-179 and Cys-208 are disulfide-bonded.

Belongs to the glycosyl hydrolase 18 family. Chitinase class II subfamily.

The protein resides in the secreted. It localises to the extracellular space. It carries out the reaction Random endo-hydrolysis of N-acetyl-beta-D-glucosaminide (1-&gt;4)-beta-linkages in chitin and chitodextrins.. This protein functions as a defense against chitin containing fungal pathogens. In Cicer arietinum (Chickpea), this protein is Acidic endochitinase.